Consider the following 166-residue polypeptide: Putative 4-hydroxy-4-methyl-2-oxoglutarate aldolase 2 (166 aa).

A2 carries the post-translational modification N-acetylalanine. Substrate contacts are provided by residues 81–84 and R103; that span reads GGNP. Residue D104 coordinates a divalent metal cation.

The protein belongs to the class II aldolase/RraA-like family. In terms of assembly, homotrimer. A divalent metal cation serves as cofactor.

It catalyses the reaction 4-hydroxy-4-methyl-2-oxoglutarate = 2 pyruvate. The catalysed reaction is oxaloacetate + H(+) = pyruvate + CO2. Catalyzes the aldol cleavage of 4-hydroxy-4-methyl-2-oxoglutarate (HMG) into 2 molecules of pyruvate. Also contains a secondary oxaloacetate (OAA) decarboxylase activity due to the common pyruvate enolate transition state formed following C-C bond cleavage in the retro-aldol and decarboxylation reactions. This is Putative 4-hydroxy-4-methyl-2-oxoglutarate aldolase 2 from Arabidopsis thaliana (Mouse-ear cress).